Consider the following 417-residue polypeptide: UDP-N-acetylglucosamine 1-carboxyvinyltransferase (417 aa).

22–23 lines the phosphoenolpyruvate pocket; the sequence is KN. Residue Arg-92 coordinates UDP-N-acetyl-alpha-D-glucosamine. Residue Cys-116 is the Proton donor of the active site. Cys-116 bears the 2-(S-cysteinyl)pyruvic acid O-phosphothioketal mark. UDP-N-acetyl-alpha-D-glucosamine is bound by residues Asp-304 and Ile-326.

This sequence belongs to the EPSP synthase family. MurA subfamily.

It localises to the cytoplasm. It carries out the reaction phosphoenolpyruvate + UDP-N-acetyl-alpha-D-glucosamine = UDP-N-acetyl-3-O-(1-carboxyvinyl)-alpha-D-glucosamine + phosphate. Its pathway is cell wall biogenesis; peptidoglycan biosynthesis. In terms of biological role, cell wall formation. Adds enolpyruvyl to UDP-N-acetylglucosamine. The chain is UDP-N-acetylglucosamine 1-carboxyvinyltransferase from Geotalea daltonii (strain DSM 22248 / JCM 15807 / FRC-32) (Geobacter daltonii).